Consider the following 447-residue polypeptide: UDP-glycosyltransferase 76B1 (447 aa).

Residues S269, 327 to 328 (WA), 345 to 353 (HCGWNSTLE), and 367 to 370 (FGDQ) each bind UDP-alpha-D-glucose.

It belongs to the UDP-glycosyltransferase family. Expressed in roots, leaves, hydathodes, sepals and style.

Functionally, glycosylates the amino acid-related molecules isoleucic acid (2-hydroxy-3-methylpentanoic acid) and valic acid (2-hydroxy-3-methylbutyric acid). Acts as a negative regulator of salicylic acid (SA)-dependent plant defense in the absence of pathogens and promotes the jasmonate (JA) response. Negatively influences the onset of senescence. The polypeptide is UDP-glycosyltransferase 76B1 (Arabidopsis thaliana (Mouse-ear cress)).